Here is a 487-residue protein sequence, read N- to C-terminus: 3-octaprenyl-4-hydroxybenzoate carboxy-lyase (487 aa).

Asn172 contributes to the Mn(2+) binding site. Residues 175–177, 189–191, and 194–195 each bind prenylated FMN; these read IYR, RWL, and RG. Glu238 contributes to the Mn(2+) binding site. The active-site Proton donor is the Asp287.

Belongs to the UbiD family. As to quaternary structure, homohexamer. Prenylated FMN is required as a cofactor. Requires Mn(2+) as cofactor.

The protein resides in the cell membrane. The catalysed reaction is a 4-hydroxy-3-(all-trans-polyprenyl)benzoate + H(+) = a 2-(all-trans-polyprenyl)phenol + CO2. It functions in the pathway cofactor biosynthesis; ubiquinone biosynthesis. In terms of biological role, catalyzes the decarboxylation of 3-octaprenyl-4-hydroxy benzoate to 2-octaprenylphenol, an intermediate step in ubiquinone biosynthesis. The chain is 3-octaprenyl-4-hydroxybenzoate carboxy-lyase from Nitrosomonas europaea (strain ATCC 19718 / CIP 103999 / KCTC 2705 / NBRC 14298).